Consider the following 476-residue polypeptide: CDK5 and ABL1 enzyme substrate 2 (476 aa).

Residues 1–119 (MAAAAAGGAP…GLGLDGQRQR (119 aa)) form a disordered region. Over residues 30 to 40 (PRRRGDSRRRQ) the composition is skewed to basic residues. Positions 65–96 (PAPPPPPPTEAREAPAPPPAPPGGLPGLPARP) are enriched in pro residues. Phosphoserine is present on residues serine 128 and serine 206. The interval 256–295 (DSHGLLPQPRPSIPRAPPGSRHKPVPTKSTPAGTELGSDG) is disordered. Positions 263–272 (QPRPSIPRAP) are enriched in pro residues.

The protein belongs to the cyclin family. As to quaternary structure, binds to CDK3, CDK5 and ABL1. The C-terminal cyclin-box-like region binds to CDK5. In terms of tissue distribution, widely expressed.

Functionally, unknown. Probably involved in G1-S cell cycle transition. The sequence is that of CDK5 and ABL1 enzyme substrate 2 (Cables2) from Mus musculus (Mouse).